The sequence spans 615 residues: MDRRSWLWRRKSSEKSPGETESTGSVSSHSERFSDDQRSQSPELNSKPVTREEEATADIKILTERLSAALLNVSLKEDLAKQHAKVAEEAVSGWEKAENEAAALKQQLDASTSKVSALEDRNSHLDSALKECVRQLWQGREEQNQKIEEAINNKCKEWETTKSQLEARIEELQARQDVTTSSVHEDLYPKLEALEKENSALKLQLLSKSEEVKIRTIERDLSTQAAESASKQQLEGIKKLTKLEAECRKLRVMVRRSDNSSDLKSSIDNQSDYSGRVSFSDNEMQSPSEKIIGKSSMATSVDIGLMDDFLEMEKLAALPHSEPGRKHSESNKELEKSNAHVNQLKHELKTSLRRISELEEKVEMVEVEKLQLEMALNGSKEQIEALQSRLKEIEGKLSEMKKLEAENQELELLLGESGKQMEDLQRQLNKAQVNLSELETRRAEKLELTMCLNGTKKQLETSQNRLKETERKLTELQTLLHLTKDAKEAAEDGLKAANGKTEAIESRLKDVEAEAESLILKIKSLEDVTEKERALSAKHNSKCNELQDEISKLKQELEHHQETEPAPNHIKGFELKQEKELAVAASKFAECQRTIASLGQRLQSLATFEDFLIES.

Basic and acidic residues predominate over residues M1 to G18. The disordered stretch occupies residues M1 to A55. The span at E19–S28 shows a compositional bias: polar residues. The segment covering H29–R38 has biased composition (basic and acidic residues). Residues S39–P48 are compositionally biased toward polar residues. Coiled coils occupy residues A87–R121 and E148–E211. Disordered stretches follow at residues D258–E289 and P319–Q343. Positions D262–S288 are enriched in polar residues. A compositionally biased stretch (basic and acidic residues) spans E322–Q343. Residues H327–T563 are a coiled coil.

Belongs to the FPP family. Interacts with WPP/MAF proteins. Binds to COG2; this interaction promotes the association between cortical microtubules and EXO70A1. Accumulates in preferentially xylem cells.

The protein resides in the vesicle. Ensures, when in complex with COG2 and FPP2/VETH2, the correct secondary cell wall (SCW) deposition pattern by recruiting exocyst components to cortical microtubules in xylem cells during secondary cell wall deposition by recruiting EXO70A1. The chain is Filament-like plant protein 3 from Arabidopsis thaliana (Mouse-ear cress).